The chain runs to 445 residues: Trigger factor (445 aa).

A PPIase FKBP-type domain is found at glycine 163–proline 248. The disordered stretch occupies residues lysine 425 to lysine 445.

This sequence belongs to the FKBP-type PPIase family. Tig subfamily.

The protein resides in the cytoplasm. It catalyses the reaction [protein]-peptidylproline (omega=180) = [protein]-peptidylproline (omega=0). Functionally, involved in protein export. Acts as a chaperone by maintaining the newly synthesized protein in an open conformation. Functions as a peptidyl-prolyl cis-trans isomerase. The chain is Trigger factor from Lacticaseibacillus casei (strain BL23) (Lactobacillus casei).